The sequence spans 685 residues: Polyphosphate kinase (685 aa).

Asparagine 45 is a binding site for ATP. Mg(2+) contacts are provided by arginine 375 and arginine 405. Histidine 435 acts as the Phosphohistidine intermediate in catalysis. Positions 468, 564, and 592 each coordinate ATP.

It belongs to the polyphosphate kinase 1 (PPK1) family. The cofactor is Mg(2+). Post-translationally, an intermediate of this reaction is the autophosphorylated ppk in which a phosphate is covalently linked to a histidine residue through a N-P bond.

The catalysed reaction is [phosphate](n) + ATP = [phosphate](n+1) + ADP. Its function is as follows. Catalyzes the reversible transfer of the terminal phosphate of ATP to form a long-chain polyphosphate (polyP). In Neisseria meningitidis serogroup A / serotype 4A (strain DSM 15465 / Z2491), this protein is Polyphosphate kinase.